We begin with the raw amino-acid sequence, 156 residues long: Small ribosomal subunit protein uS7 (156 aa).

The protein belongs to the universal ribosomal protein uS7 family. Part of the 30S ribosomal subunit. Contacts proteins S9 and S11.

Functionally, one of the primary rRNA binding proteins, it binds directly to 16S rRNA where it nucleates assembly of the head domain of the 30S subunit. Is located at the subunit interface close to the decoding center, probably blocks exit of the E-site tRNA. The polypeptide is Small ribosomal subunit protein uS7 (Beutenbergia cavernae (strain ATCC BAA-8 / DSM 12333 / CCUG 43141 / JCM 11478 / NBRC 16432 / NCIMB 13614 / HKI 0122)).